We begin with the raw amino-acid sequence, 204 residues long: Phosphatidylserine decarboxylase proenzyme (204 aa).

Catalysis depends on serine 169, which acts as the Schiff-base intermediate with substrate; via pyruvic acid. A Pyruvic acid (Ser); by autocatalysis modification is found at serine 169.

Belongs to the phosphatidylserine decarboxylase family. PSD-A subfamily. Heterodimer of a large membrane-associated beta subunit and a small pyruvoyl-containing alpha subunit. It depends on pyruvate as a cofactor. In terms of processing, is synthesized initially as an inactive proenzyme. Formation of the active enzyme involves a self-maturation process in which the active site pyruvoyl group is generated from an internal serine residue via an autocatalytic post-translational modification. Two non-identical subunits are generated from the proenzyme in this reaction, and the pyruvate is formed at the N-terminus of the alpha chain, which is derived from the carboxyl end of the proenzyme. The post-translation cleavage follows an unusual pathway, termed non-hydrolytic serinolysis, in which the side chain hydroxyl group of the serine supplies its oxygen atom to form the C-terminus of the beta chain, while the remainder of the serine residue undergoes an oxidative deamination to produce ammonia and the pyruvoyl prosthetic group on the alpha chain.

It localises to the cell membrane. It carries out the reaction a 1,2-diacyl-sn-glycero-3-phospho-L-serine + H(+) = a 1,2-diacyl-sn-glycero-3-phosphoethanolamine + CO2. It participates in phospholipid metabolism; phosphatidylethanolamine biosynthesis; phosphatidylethanolamine from CDP-diacylglycerol: step 2/2. Its function is as follows. Catalyzes the formation of phosphatidylethanolamine (PtdEtn) from phosphatidylserine (PtdSer). This Solibacter usitatus (strain Ellin6076) protein is Phosphatidylserine decarboxylase proenzyme.